The sequence spans 185 residues: MASTSDIRNGVVLNINGQLNTVIEFQHVKPGKGGAFVRTKLKNILTGKVVDKTFNAGASVVLENVDRRDCTYLYRDADSFVFMDLADYDQIRLTASQVASAANYLSDNQKVVIATHNNAPLYVDLPPSVVLAVTHTEPGVQADRSTGGTKPATLETGYQIQVPLFITVGTRIRVDTRTGAYIGKA.

This sequence belongs to the elongation factor P family.

The protein localises to the cytoplasm. The protein operates within protein biosynthesis; polypeptide chain elongation. Functionally, involved in peptide bond synthesis. Stimulates efficient translation and peptide-bond synthesis on native or reconstituted 70S ribosomes in vitro. Probably functions indirectly by altering the affinity of the ribosome for aminoacyl-tRNA, thus increasing their reactivity as acceptors for peptidyl transferase. This chain is Elongation factor P, found in Tropheryma whipplei (strain TW08/27) (Whipple's bacillus).